The sequence spans 89 residues: NADH-ubiquinone oxidoreductase chain 4L (89 aa).

3 consecutive transmembrane segments (helical) span residues 1 to 21 (MSLTLVLFLIGILGFVFNRKN), 22 to 42 (IILMLISIEIMLLSITFLILV), and 57 to 77 (IYIIVVAGAESAIGLAILVAF).

Belongs to the complex I subunit 4L family.

It is found in the mitochondrion membrane. It catalyses the reaction a ubiquinone + NADH + 5 H(+)(in) = a ubiquinol + NAD(+) + 4 H(+)(out). In terms of biological role, core subunit of the mitochondrial membrane respiratory chain NADH dehydrogenase (Complex I) that is believed to belong to the minimal assembly required for catalysis. Complex I functions in the transfer of electrons from NADH to the respiratory chain. The immediate electron acceptor for the enzyme is believed to be ubiquinone. In Hypocrea jecorina (Trichoderma reesei), this protein is NADH-ubiquinone oxidoreductase chain 4L (ND4L).